A 216-amino-acid polypeptide reads, in one-letter code: Large ribosomal subunit protein uL3 (216 aa).

The protein belongs to the universal ribosomal protein uL3 family. Part of the 50S ribosomal subunit. Forms a cluster with proteins L14 and L19.

In terms of biological role, one of the primary rRNA binding proteins, it binds directly near the 3'-end of the 23S rRNA, where it nucleates assembly of the 50S subunit. The chain is Large ribosomal subunit protein uL3 from Symbiobacterium thermophilum (strain DSM 24528 / JCM 14929 / IAM 14863 / T).